Here is a 254-residue protein sequence, read N- to C-terminus: Very-long-chain (3R)-3-hydroxyacyl-CoA dehydratase 2 (254 aa).

An N-acetylalanine modification is found at Ala-2. At 2–41 (AAVAATAAAKGNGGGGGRAGAGDASGTRKKKGPGPLATAY) the chain is on the cytoplasmic side. The interval 11–33 (KGNGGGGGRAGAGDASGTRKKKG) is disordered. Over residues 12-21 (GNGGGGGRAG) the composition is skewed to gly residues. The chain crosses the membrane as a helical span at residues 42–60 (LVIYNVVMTAGWLVIAVGL). At 61-79 (VRAYLAKGSYHSLYYSIEK) the chain is on the lumenal side. A helical transmembrane segment spans residues 80–97 (PLKFFQTGALLEILHCAI). Over 98–107 (GIVPSSVVLT) the chain is Cytoplasmic. A helical transmembrane segment spans residues 108 to 125 (SFQVMSRVFLIWAVTHSV). The Lumenal segment spans residues 126 to 130 (KEVQS). A helical membrane pass occupies residues 131 to 146 (EDSVLLFVIAWTITEI). Over 147-169 (IRYSFYTFSLLNHLPYLIKWARY) the chain is Cytoplasmic. Residues 170–187 (TLFIVLYPMGVSGELLTI) traverse the membrane as a helical segment. Active-site residues include Tyr-176 and Glu-183. The Lumenal portion of the chain corresponds to 188-217 (YAALPFVRQAGLYSISLPNKYNFSFDYYAF). The interval 198-214 (GLYSISLPNKYNFSFDY) is may be involved in interaction with TECR. A glycan (N-linked (GlcNAc...) asparagine) is linked at Asn-209. A helical membrane pass occupies residues 218-235 (LILIMISYIPIFPQLYFH). Residues 236-254 (MIHQRRKILSHTEEHKKFE) lie on the Cytoplasmic side of the membrane.

The protein belongs to the very long-chain fatty acids dehydratase HACD family. As to quaternary structure, may interact with enzymes of the ELO family (including ELOVL1); with those enzymes that mediate condensation, the first of the four steps of the reaction cycle responsible for fatty acids elongation, may be part of a larger fatty acids elongase complex. Interacts with BCAP31. Interacts (via the third lumenal loop) with TECR. Highly expressed in testis, spleen, prostate, colon and heart, followed by moderate expression in thymus, ovary, small intestine, peripheral blood leukocytes, liver, skeletal muscle and pancreas. Weakly detected in kidney, placenta, brain and lung.

The protein localises to the endoplasmic reticulum membrane. It carries out the reaction a very-long-chain (3R)-3-hydroxyacyl-CoA = a very-long-chain (2E)-enoyl-CoA + H2O. It catalyses the reaction (3R)-hydroxyhexadecanoyl-CoA = (2E)-hexadecenoyl-CoA + H2O. The catalysed reaction is (3R)-hydroxyoctadecanoyl-CoA = (2E)-octadecenoyl-CoA + H2O. The enzyme catalyses (3R)-hydroxyeicosanoyl-CoA = (2E)-eicosenoyl-CoA + H2O. It carries out the reaction (3R)-hydroxydocosanoyl-CoA = (2E)-docosenoyl-CoA + H2O. It catalyses the reaction (3R)-hydroxytetracosanoyl-CoA = (2E)-tetracosenoyl-CoA + H2O. The catalysed reaction is (3R)-hydroxyhexacosanoyl-CoA = (2E)-hexacosenoyl-CoA + H2O. Its pathway is lipid metabolism; fatty acid biosynthesis. Catalyzes the third of the very long-chain fatty acids (VLCFA) elongation four-step cycle (condensation, reduction, dehydration, and reduction). This endoplasmic reticulum-elongation process is characterized by the addition of two carbons to the lipid chain through each cycle. This enzyme catalyzes the dehydration of the 3-hydroxyacyl-CoA intermediate into trans-2,3-enoyl-CoA, within each cycle of elongation. Therefore, it participates in the production of various VLCFAs involved in multiple biological processes as precursors of membrane lipids and lipid mediators. The chain is Very-long-chain (3R)-3-hydroxyacyl-CoA dehydratase 2 from Homo sapiens (Human).